The sequence spans 139 residues: Gene 39 protein (139 aa).

The polypeptide is Gene 39 protein (39) (Mycobacterium (Mycobacteriophage L5)).